Consider the following 226-residue polypeptide: MKVTFLGHAVVLIEGKKNIIIDPFISGNPVCPVKLEDLPKIDYILVTHGHGDHLGDAVEIAKKNDATVISNYEICHYLGKKGVKTHAMHIGGSYLFDFGRVKMTPAVHGSGILDGDSMIYGGNPAGFLITLERKKIYHAGDTGLTREMELLGEENVDVAFLPIGGNFVMDVEDAVRATAMIKPKKVVPMHYGTWELIFADVELFKKKVTEMSVECVILEPGESLEL.

The protein belongs to the UPF0173 family.

The sequence is that of UPF0173 metal-dependent hydrolase Tpet_1587 from Thermotoga petrophila (strain ATCC BAA-488 / DSM 13995 / JCM 10881 / RKU-1).